Reading from the N-terminus, the 434-residue chain is Na(+)/H(+) antiporter NhaA 1 (434 aa).

10 helical membrane-spanning segments follow: residues 30 to 50 (TGGL…NVAG), 70 to 90 (LSIE…VTGL), 108 to 128 (ALPI…FVLV), 141 to 161 (VGWA…LAVV), 172 to 192 (FLLT…AIFY), 195 to 215 (QVHW…TVAV), 286 to 306 (FAVP…VSGF), 318 to 338 (VIAG…WLLA), 354 to 374 (VLGM…IGSL), and 386 to 406 (VTLG…VVLS).

The protein belongs to the NhaA Na(+)/H(+) (TC 2.A.33) antiporter family.

The protein localises to the cell membrane. The enzyme catalyses Na(+)(in) + 2 H(+)(out) = Na(+)(out) + 2 H(+)(in). Functionally, na(+)/H(+) antiporter that extrudes sodium in exchange for external protons. This is Na(+)/H(+) antiporter NhaA 1 from Kineococcus radiotolerans (strain ATCC BAA-149 / DSM 14245 / SRS30216).